The sequence spans 263 residues: uncharacterized protein (263 aa).

31-38 (GPTGSGKT) contributes to the ATP binding site.

Belongs to the CbbQ/NirQ/NorQ/GpvN family.

This is an uncharacterized protein from Staphylococcus epidermidis (strain ATCC 35984 / DSM 28319 / BCRC 17069 / CCUG 31568 / BM 3577 / RP62A).